Reading from the N-terminus, the 451-residue chain is Ribonuclease J (451 aa).

Residues histidine 84, histidine 86, aspartate 88, histidine 89, histidine 155, and aspartate 177 each contribute to the Zn(2+) site. 384-388 (HVSGH) contributes to the substrate binding site. Residue histidine 410 participates in Zn(2+) binding.

Belongs to the metallo-beta-lactamase superfamily. RNA-metabolizing metallo-beta-lactamase-like family. Archaeal RNase J subfamily. Homodimer. Zn(2+) serves as cofactor.

It localises to the cytoplasm. Its activity is regulated as follows. Inhibited by 1,10-phenanthroline. Functionally, a highly processive 5'-3' exoribonuclease; no evidence has been seen for endonuclease activity. Prefers 5'-phosphate or 5'-hydroxyl ends; 5'-triphosphate substrates are very poorly degraded, does not degrade circular RNA. Does not degrade pre-tRNA(Trp) suggesting it is inhibited by strong secondary structures. Also degrades ssNDA but not dsDNA. This is Ribonuclease J from Pyrococcus abyssi (strain GE5 / Orsay).